Here is a 414-residue protein sequence, read N- to C-terminus: TAR DNA-binding protein 43 (414 aa).

Residues K79, K84, K95, K102, and K181 each participate in a glycyl lysine isopeptide (Lys-Gly) (interchain with G-Cter in SUMO2) cross-link. RRM domains follow at residues 104–200 (SDLI…RCTE) and 191–262 (RKVF…NAEP). S183 is modified (phosphoserine). An interaction with UBQLN2 region spans residues 216–414 (DVMDVFIPKP…MDSKSSGWGM (199 aa)). Positions 261–274 (EPKHNSNRQLERSG) are enriched in basic and acidic residues. Disordered regions lie at residues 261-303 (EPKH…GNNQ) and 341-373 (ASQQ…GNNS). K263 is covalently cross-linked (Glycyl lysine isopeptide (Lys-Gly) (interchain with G-Cter in SUMO2)). Residues 275-303 (RFGGNPGGFGNQGGFGNSRGGGAGLGNNQ) are compositionally biased toward gly residues. Phosphoserine is present on S292. R293 is subject to Omega-N-methylarginine. The segment covering 342–358 (SQQNQSGPSGNNQNQGN) has biased composition (low complexity).

Monomer and component of the SFPQ-NONO complex, which is probably a heterotetramer of two 52 kDa (NONO) and two 100 kDa (SFPQ) subunits. NONO is a component of spliceosome and U5.4/6 snRNP complexes. Interacts with CPNE4 (via VWFA domain). Forms heterodimers with PSPC1; this involves formation of a coiled coil domain by helices from both proteins. Part of complex consisting of SFPQ, NONO and MATR3. Part of a complex consisting of SFPQ, NONO and NR5A1. Part of a complex consisting of SFPQ, NONO and TOP1. Interacts with SPI1. Interacts with RNF43. Interacts with PER1 and PER2. Part of the HDP-RNP complex composed of at least HEXIM1, PRKDC, XRCC5, XRCC6, paraspeckle proteins (SFPQ, NONO, PSPC1, RBM14, and MATR3) and NEAT1 RNA. Interacts (via second RRM domain) with WASL; the interaction is direct. Component of a multiprotein complex with WASL and SFPQ. Interacts with ERCC6. Interacts (via DNA-binding domain) with TET1. Post-translationally, hyperphosphorylated. Ubiquitinated.

Its subcellular location is the nucleus. The protein localises to the nucleolus. It is found in the nucleus speckle. It localises to the chromosome. The protein resides in the mitochondrion. DNA- and RNA binding protein, involved in several nuclear processes. Binds the conventional octamer sequence in double-stranded DNA. Also binds single-stranded DNA and RNA at a site independent of the duplex site. Involved in pre-mRNA splicing, probably as a heterodimer with SFPQ. Interacts with U5 snRNA, probably by binding to a purine-rich sequence located on the 3' side of U5 snRNA stem 1b. Together with PSPC1, required for the formation of nuclear paraspeckles. The SFPQ-NONO heteromer associated with MATR3 may play a role in nuclear retention of defective RNAs. The SFPQ-NONO heteromer may be involved in DNA unwinding by modulating the function of topoisomerase I/TOP1. The SFPQ-NONO heteromer may be involved in DNA non-homologous end joining (NHEJ) required for double-strand break repair and V(D)J recombination and may stabilize paired DNA ends. In vitro, the complex strongly stimulates DNA end joining, binds directly to the DNA substrates and cooperates with the Ku70/G22P1-Ku80/XRCC5 (Ku) dimer to establish a functional preligation complex. NONO is involved in transcriptional regulation. The SFPQ-NONO-NR5A1 complex binds to the CYP17 promoter and regulates basal and cAMP-dependent transcriptional activity. NONO binds to an enhancer element in long terminal repeats of endogenous intracisternal A particles (IAPs) and activates transcription. Regulates the circadian clock by repressing the transcriptional activator activity of the CLOCK-BMAL1 heterodimer. Important for the functional organization of GABAergic synapses. Plays a specific and important role in the regulation of synaptic RNAs and GPHN/gephyrin scaffold structure, through the regulation of GABRA2 transcript. Plays a key role during neuronal differentiation by recruiting TET1 to genomic loci and thereby regulating 5-hydroxymethylcytosine levels. Plays a role in the regulation of DNA virus-mediated innate immune response by assembling into the HDP-RNP complex, a complex that serves as a platform for IRF3 phosphorylation and subsequent innate immune response activation through the cGAS-STING pathway. This is TAR DNA-binding protein 43 (TARDBP) from Pongo abelii (Sumatran orangutan).